We begin with the raw amino-acid sequence, 493 residues long: Vinyl phenol reductase (493 aa).

Residues alanine 19, glutamate 38, serine 46, threonine 50, glycine 52, alanine 156, aspartate 224, asparagine 448, and valine 467 each coordinate FAD.

Belongs to the FAD-dependent oxidoreductase 2 family. FRD/SDH subfamily. The cofactor is FAD.

The enzyme catalyses 4-vinylphenol + NADH + H(+) = 4-ethylphenol + NAD(+). It carries out the reaction 3,4-dihydroxystyrene + NADH + H(+) = 4-ethylcatechol + NAD(+). It catalyses the reaction 2-methoxy-4-vinylphenol + NADH + H(+) = 4-ethyl-2-methoxyphenol + NAD(+). In terms of biological role, involved in the production of ethylphenols during the degradation of hydroxycinnamic acids. Catalyzes the reduction of vinylphenols (4-vinylphenol (4-hydroxystyrene), 4-vinylcatechol (3,4-dihydroxystyrene), and 4-vinylguaiacol (2-methoxy-4-vinylphenol)) to their corresponding ethylphenols (4-ethylphenol, 4-ethylcatechol, and 4-ethylguaiacol, respectively) in the presence of NADH. These compounds are considered the most important flavor components of fermented soy sauce, and, on the other hand, are considered off flavor and responsible for sensorial wine and cider alteration. The 4-ethylphenol produced by the gut bacteria L.plantarum strain WCFS1 can get subsequent sulfation to 4-ethylphenyl sulfate (4EPS) by host sulfotransferase (SULT1A1); 4EPS can enter the brain and seems to alter brain activity. Therefore, this enzyme likely plays a role in gut microbiota-host metabolic interactions. In Lactiplantibacillus plantarum (strain ATCC BAA-793 / NCIMB 8826 / WCFS1) (Lactobacillus plantarum), this protein is Vinyl phenol reductase.